The chain runs to 400 residues: Argininosuccinate synthase (400 aa).

9–17 (AYSGGLDTS) is a binding site for ATP. Tyr-87 provides a ligand contact to L-citrulline. Gly-117 provides a ligand contact to ATP. Thr-119, Asn-123, and Asp-124 together coordinate L-aspartate. Residue Asn-123 participates in L-citrulline binding. L-citrulline contacts are provided by Arg-127, Ser-176, Ser-185, Glu-261, and Tyr-273.

This sequence belongs to the argininosuccinate synthase family. Type 1 subfamily. Homotetramer.

The protein localises to the cytoplasm. The catalysed reaction is L-citrulline + L-aspartate + ATP = 2-(N(omega)-L-arginino)succinate + AMP + diphosphate + H(+). It participates in amino-acid biosynthesis; L-arginine biosynthesis; L-arginine from L-ornithine and carbamoyl phosphate: step 2/3. In Pelodictyon phaeoclathratiforme (strain DSM 5477 / BU-1), this protein is Argininosuccinate synthase.